The primary structure comprises 336 residues: Torsin-1B (336 aa).

The N-terminal stretch at 1–24 (MLRAGWLRGAAALALLLAARVVAA) is a signal peptide. N-linked (GlcNAc...) asparagine glycosylation occurs at N64. Residue 109–116 (GWAGTGKN) coordinates ATP. N165 carries N-linked (GlcNAc...) asparagine glycosylation.

The protein belongs to the ClpA/ClpB family. Torsin subfamily. Homohexamer. Interacts with TOR1A; the interaction may be specific of neural tissues. Interacts with TOR1AIP1; TOR1AIP1 is required for TOR1B location on the nuclear membrane. Interacts (ATP-bound) with TOR1AIP2; important for endoplasmic reticulum integrity. N-glycosylated. Widely expressed with low levels in brain.

It localises to the endoplasmic reticulum lumen. It is found in the nucleus membrane. It catalyses the reaction ATP + H2O = ADP + phosphate + H(+). May serve as a molecular chaperone assisting in the proper folding of secreted and/or membrane proteins. Plays a role in non-neural cells nuclear envelope and endoplasmic reticulum integrity. May have a redundant function with TOR1A in non-neural tissues. This Homo sapiens (Human) protein is Torsin-1B (TOR1B).